The following is a 188-amino-acid chain: Ribosome maturation factor RimM (188 aa).

Residues Glu-98–Val-171 enclose the PRC barrel domain.

Belongs to the RimM family. In terms of assembly, binds ribosomal protein uS19.

It is found in the cytoplasm. Its function is as follows. An accessory protein needed during the final step in the assembly of 30S ribosomal subunit, possibly for assembly of the head region. Essential for efficient processing of 16S rRNA. May be needed both before and after RbfA during the maturation of 16S rRNA. It has affinity for free ribosomal 30S subunits but not for 70S ribosomes. The polypeptide is Ribosome maturation factor RimM (Myxococcus xanthus (strain DK1622)).